The primary structure comprises 137 residues: Basic phospholipase A2 DsM-S1 (137 aa).

Residues 1-16 form the signal peptide; that stretch reads MRTLWIVAVCLIGVEG. Cystine bridges form between Cys42/Cys131, Cys44/Cys60, Cys59/Cys111, Cys65/Cys137, Cys66/Cys104, Cys73/Cys97, and Cys91/Cys102. 3 residues coordinate Ca(2+): Tyr43, Gly45, and Gly47. The active site involves His63. Residue Asp64 coordinates Ca(2+). The active site involves Asp105.

This sequence belongs to the phospholipase A2 family. Group II subfamily. D49 sub-subfamily. Requires Ca(2+) as cofactor. As to expression, expressed by the venom gland.

It is found in the secreted. The catalysed reaction is a 1,2-diacyl-sn-glycero-3-phosphocholine + H2O = a 1-acyl-sn-glycero-3-phosphocholine + a fatty acid + H(+). In terms of biological role, snake venom phospholipase A2 (PLA2) that is neurotoxic. PLA2 catalyzes the calcium-dependent hydrolysis of the 2-acyl groups in 3-sn-phosphoglycerides. The chain is Basic phospholipase A2 DsM-S1 from Daboia siamensis (Eastern Russel's viper).